Here is a 203-residue protein sequence, read N- to C-terminus: Guanylate kinase (203 aa).

A Guanylate kinase-like domain is found at 5–184 (GMLIVLSGPS…AVQRIEKIIE (180 aa)). Position 12–19 (12–19 (GPSGVGKG)) interacts with ATP.

It belongs to the guanylate kinase family.

Its subcellular location is the cytoplasm. It catalyses the reaction GMP + ATP = GDP + ADP. In terms of biological role, essential for recycling GMP and indirectly, cGMP. In Latilactobacillus sakei subsp. sakei (strain 23K) (Lactobacillus sakei subsp. sakei), this protein is Guanylate kinase.